The sequence spans 660 residues: Pro-secreted protein ORF2 (660 aa).

A signal peptide spans methionine 1–glycine 23. Disordered stretches follow at residues alanine 19–glycine 43 and alanine 64–valine 125. Positions arginine 28–arginine 33 match the Nuclear localization signal motif. Residues arginine 93 to aspartate 124 show a composition bias toward low complexity. N-linked (GlcNAc...) asparagine; by host glycans are attached at residues asparagine 137 and asparagine 310. Positions isoleucine 368 to glutamine 394 are particle formation. An N-linked (GlcNAc...) asparagine; by host glycan is attached at asparagine 562. The tract at residues threonine 585 to leucine 610 is oligomerization.

It belongs to the hepevirus capsid protein family. As to quaternary structure, homodimer. Self-assembles to form the capsid. The capsid is dominated by dimers that define the 30 morphological units. Interacts with phosphorylated protein ORF3. Interacts with host TMEM134. Interacts with host ASGR1 and ASGR2; these interactions facilitate infection of host hepatocytes. Cleaved by host protease in the N-terminus. In terms of processing, N-glycosylated. Post-translationally, not N-glycosylated. The C-terminus of the capsid protein ORF2 is truncated in non-enveloped virions shedded in feces, probably due to host proteases.

The protein localises to the secreted. The protein resides in the virion. It is found in the host cytoplasm. Its subcellular location is the host endoplasmic reticulum. It localises to the host Golgi apparatus. The protein localises to the host cell surface. The protein resides in the host nucleus. Functionally, plays a role in the inhibition of host antibody-mediated neutralization without blocking viral cell entry. In terms of biological role, forms an icosahedral capsid with a T=1 symmetry and a 34 nm diameter. The capsid is composed of 60 copies linked to each other. Binds to the 5' end of the genomic RNA to mediate genome encapsidation. Binds to heparin surface proteoglycans (HSPGs) to mediate viral entry. Additionally, the interactions with host ASGR1 and ASGR2 facilitate viral infection of hepatocytes. Inhibits IFN production by blocking host TBK1-induced IRF3 phosphorylation. The nuclear form probably modulates host gene expression. The chain is Pro-secreted protein ORF2 from Hepatitis E virus genotype 3 (isolate Swine/United States/swUS1) (HEV-3).